The following is a 989-amino-acid chain: Presequence protease, mitochondrial (989 aa).

Residues 1-16 (MLRFQRFASSYAQAQA) constitute a mitochondrion transit peptide. His84 serves as a coordination point for Zn(2+). Catalysis depends on Glu87, which acts as the Proton acceptor. A Zn(2+)-binding site is contributed by His88. Glu160 is a catalytic residue. Glu185 lines the Zn(2+) pocket. The residue at position 920 (Ser920) is a Phosphoserine. An ATP-binding site is contributed by 972–979 (GPGIEGKT).

This sequence belongs to the peptidase M16 family. PreP subfamily. Monomer and homodimer; homodimerization is induced by binding of the substrate. Zn(2+) is required as a cofactor.

Its subcellular location is the mitochondrion intermembrane space. It is found in the mitochondrion matrix. Activated by nucleotides, including ATP, GTP, CTP, UTP, and ADP. Activated by copper, manganese, calcium and magnesium ions; copper and manganese restore activity following inactivation by EDTA (ethylenediaminetetraacetic acid). Inhibited by metal chelators including EDTA, EGTA (ethylene glycol bis(2-aminoethyl)tetraacetic acid), and 1,10-phenanthroline. Inhibited by copper, zinc, and iron ions. Also inhibited by dithiothreitol p-mercuribenzenesulfonic acid, N-ethylmaleimide, protoporphyrin, hemin, protamine and triarginine. In terms of biological role, degrades mitochondrial transit peptides after their cleavage in the intermembrane space or in the matrix, and presequence peptides; clearance of these peptides is required to keep the presequence processing machinery running. Preferentially cleaves the N-terminal side of paired basic amino acid residues. Also degrades other unstructured peptides. May function as an ATP-dependent peptidase as opposed to a metalloendopeptidase. This Saccharomyces cerevisiae (strain ATCC 204508 / S288c) (Baker's yeast) protein is Presequence protease, mitochondrial.